The primary structure comprises 982 residues: Serine/threonine-protein kinase PknD (982 aa).

In terms of domain architecture, Protein kinase spans 51–342 (YQIIKSIGKG…ELIRDIENYL (292 aa)). Residues 57 to 65 (IGKGGMGEV) and Lys-80 each bind ATP. The Proton acceptor role is filled by Asp-186.

This sequence belongs to the protein kinase superfamily. Ser/Thr protein kinase family. Autophosphorylated on serine and threonine residues.

It carries out the reaction L-seryl-[protein] + ATP = O-phospho-L-seryl-[protein] + ADP + H(+). The enzyme catalyses L-threonyl-[protein] + ATP = O-phospho-L-threonyl-[protein] + ADP + H(+). Functionally, together with the serine/threonine kinase Pkn1, may play a role in the specific interactions with host proteins during intracellular growth. In Protochlamydia amoebophila (strain UWE25), this protein is Serine/threonine-protein kinase PknD.